The sequence spans 88 residues: Putative transmembrane protein ORF24 (88 aa).

The next 3 helical transmembrane spans lie at L16–M36, A42–F62, and F64–I84.

Its subcellular location is the host membrane. This Haloarcula hispanica (His1V) protein is Putative transmembrane protein ORF24.